The following is a 373-amino-acid chain: Centrosomal protein of 41 kDa (373 aa).

Positions Q89–S137 are disordered. 2 positions are modified to phosphoserine: S96 and S99. Polar residues predominate over residues T106–N127. Position 109 is a phosphothreonine (T109). Position 121 is a phosphoserine (S121). The region spanning P169 to I266 is the Rhodanese domain. A disordered region spans residues Q275–K373. Over residues N298 to Y312 the composition is skewed to basic and acidic residues. R343 is subject to Omega-N-methylarginine. The span at S355–H366 shows a compositional bias: polar residues.

This sequence belongs to the CEP41 family. As to quaternary structure, found in a complex with TTLL6. Expressed in testis and fetal tissues.

The protein resides in the cytoplasm. It is found in the cytoskeleton. Its subcellular location is the microtubule organizing center. The protein localises to the centrosome. It localises to the cell projection. The protein resides in the cilium. It is found in the cilium basal body. Required during ciliogenesis for tubulin glutamylation in cilium. Probably acts by participating in the transport of TTLL6, a tubulin polyglutamylase, between the basal body and the cilium. In Homo sapiens (Human), this protein is Centrosomal protein of 41 kDa (CEP41).